Here is a 32-residue protein sequence, read N- to C-terminus: MSDIN-like toxin proprotein 2 (32 aa).

Positions Met-1 to Pro-10 are excised as a propeptide. Residues His-11 to Pro-17 constitute a cross-link (cyclopeptide (His-Pro)). A propeptide spanning residues Tyr-18–Lys-32 is cleaved from the precursor.

The protein belongs to the MSDIN fungal toxin family. In terms of processing, processed by the macrocyclase-peptidase enzyme POPB to yield a toxic cyclic heptapeptide. POPB first removes 10 residues from the N-terminus. Conformational trapping of the remaining peptide forces the enzyme to release this intermediate rather than proceed to macrocyclization. The enzyme rebinds the remaining peptide in a different conformation and catalyzes macrocyclization of the N-terminal 7 residues.

Its function is as follows. Probable toxin that belongs to the MSDIN-like toxin family responsible for a large number of food poisoning cases and deaths. The polypeptide is MSDIN-like toxin proprotein 2 (Amanita fuligineoides).